Here is a 502-residue protein sequence, read N- to C-terminus: Probable cytosol aminopeptidase (502 aa).

Lys269 and Asp274 together coordinate Mn(2+). Lys281 is an active-site residue. Mn(2+) contacts are provided by Asp292, Asp351, and Glu353. Residue Arg355 is part of the active site.

This sequence belongs to the peptidase M17 family. It depends on Mn(2+) as a cofactor.

Its subcellular location is the cytoplasm. It catalyses the reaction Release of an N-terminal amino acid, Xaa-|-Yaa-, in which Xaa is preferably Leu, but may be other amino acids including Pro although not Arg or Lys, and Yaa may be Pro. Amino acid amides and methyl esters are also readily hydrolyzed, but rates on arylamides are exceedingly low.. The enzyme catalyses Release of an N-terminal amino acid, preferentially leucine, but not glutamic or aspartic acids.. Its function is as follows. Presumably involved in the processing and regular turnover of intracellular proteins. Catalyzes the removal of unsubstituted N-terminal amino acids from various peptides. In Aliivibrio fischeri (strain MJ11) (Vibrio fischeri), this protein is Probable cytosol aminopeptidase.